The sequence spans 572 residues: MFS-type transporter pydD (572 aa).

A compositionally biased stretch (basic and acidic residues) spans 1-15 (MLQEDKSSETMHDPS). The segment at 1 to 46 (MLQEDKSSETMHDPSTRGVETRNVTAVDSPLETATTSESPETERTN) is disordered. An N-linked (GlcNAc...) asparagine glycan is attached at Asn23. Positions 29–39 (SPLETATTSES) are enriched in low complexity. The next 8 membrane-spanning stretches (helical) occupy residues 56 to 76 (FWAL…EGTI), 88 to 108 (LGGG…MTAM), 123 to 143 (WPML…GGAT), 156 to 176 (GIGA…VVPL), 185 to 205 (IVMG…GLIV), 212 to 232 (WTFY…FSFL), 255 to 275 (ALFV…GSVY), and 282 to 302 (VLVP…FEGS). A glycan (N-linked (GlcNAc...) asparagine) is linked at Asn317. Transmembrane regions (helical) follow at residues 321–341 (VGVM…LYFM), 358–378 (VQIL…GFLM), 386–406 (PIHY…SLLD), 419–439 (IVYS…LLAP), 451–471 (TWSF…AAVF), and 529–549 (WLVS…AREV).

This sequence belongs to the major facilitator superfamily.

The protein localises to the membrane. Its function is as follows. MFS-type transporter; part of the gene cluster that mediates the biosynthesis of pyrrocidines, fungal natural products containing a macrocyclic para-cyclophane connected to a decahydrofluorene ring system that show potent antibiotic activities toward Gram-negative bacteria. The polypeptide is MFS-type transporter pydD (Acremonium sp).